Consider the following 506-residue polypeptide: Proline--tRNA ligase (506 aa).

The protein belongs to the class-II aminoacyl-tRNA synthetase family. ProS type 3 subfamily. In terms of assembly, homodimer.

The protein localises to the cytoplasm. The catalysed reaction is tRNA(Pro) + L-proline + ATP = L-prolyl-tRNA(Pro) + AMP + diphosphate. In terms of biological role, catalyzes the attachment of proline to tRNA(Pro) in a two-step reaction: proline is first activated by ATP to form Pro-AMP and then transferred to the acceptor end of tRNA(Pro). The chain is Proline--tRNA ligase from Akkermansia muciniphila (strain ATCC BAA-835 / DSM 22959 / JCM 33894 / BCRC 81048 / CCUG 64013 / CIP 107961 / Muc).